The chain runs to 229 residues: Protein rep (229 aa).

Residue Y214 participates in DNA binding.

It belongs to the Gram-positive plasmids replication protein type 1 family.

Functionally, produces a single-strand nick in a specific site of the plasmid, and this nick results in single-strand replication by rolling circle mechanism. The chain is Protein rep from Staphylococcus aureus.